The chain runs to 59 residues: QAVRYADGYTYDIETGQVSSPYTGRVYETKGKAPFYGFGFEHPYHYYPGYYHGYPHAFY.

Gln-1 is modified (pyrrolidone carboxylic acid).

The sequence is that of Cuticle protein 7 isoform c from Limulus polyphemus (Atlantic horseshoe crab).